The primary structure comprises 3483 residues: Nonribosomal peptide synthetase Ao415 (3483 aa).

The interval 281–669 (TFKKLNETSN…DVHPLIKDVV (389 aa)) is adenylation 1. One can recognise a Carrier 1 domain in the interval 775–851 (EVFDELSTKI…GLRDHVSGKK (77 aa)). O-(pantetheine 4'-phosphoryl)serine is present on Ser-812. The condensation 1 stretch occupies residues 886-1297 (ANVLPCSPMQ…YCLLHMLQNQ (412 aa)). The interval 1363–1758 (TYRQFDDMGN…SADKDVAEIV (396 aa)) is adenylation 2. One can recognise a Carrier 2 domain in the interval 1865–1941 (EELSETEKVI…SLAKALSSAN (77 aa)). Ser-1901 is subject to O-(pantetheine 4'-phosphoryl)serine. Residues 1981–2379 (IKPCTPLQEG…LLKNPEQEVA (399 aa)) are condensation 2. The 74-residue stretch at 2412–2485 (TEAAVSIRRE…RMVVYLSSTK (74 aa)) folds into the Carrier 3 domain. Ser-2446 bears the O-(pantetheine 4'-phosphoryl)serine mark. A condensation 3 region spans residues 2520–2917 (ESILPTTPLQ…MLQKIIGNPL (398 aa)). The 77-residue stretch at 2954–3030 (DNYQNLERQV…KICLFLDKKQ (77 aa)) folds into the Carrier 4 domain. At Ser-2991 the chain carries O-(pantetheine 4'-phosphoryl)serine. Positions 3084-3368 (SEGRIFLPTF…VQEDLLKIST (285 aa)) are condensation 4.

This sequence belongs to the NRP synthetase family.

The protein operates within siderophore biosynthesis. Its function is as follows. Nonribosomal peptide synthetase; part of the gene cluster that mediates the biosynthesis of desferriferrichrome that chelates Fe(3+) to form ferrichrome. Fe(3+) is a key factor for induction of trap formation and the fungus uses the iron chelating desferriferrichrome to sequester Fe(3+) to inhibit trap formation and increase nematicidal activity. The biosynthesis of desferriferrichrome requires the action of the L-ornithine N(5)-oxygenase (LOO) Ao414 that hydroxylates L-ornithine at N(5), resulting in the formation of N(5)-hydroxyl-L-ornithine, which is subsequently N-acetylated to yield N(5)-acetyl-N(5)-hydroxy-L-ornithine (L-AHO). L-AHO harbors one hydroxamate moiety, which is the key core responsible for chelating iron. Then, L-AHO is further condensated with glycines to form desferriferrichrome through the NRPS protein Ao415. In Arthrobotrys oligospora (strain ATCC 24927 / CBS 115.81 / DSM 1491) (Nematode-trapping fungus), this protein is Nonribosomal peptide synthetase Ao415.